The following is a 244-amino-acid chain: Mitochondrial import inner membrane translocase subunit Tim21 (244 aa).

Residues 1 to 18 (MICTLLRAVRCTERLHGC) constitute a mitochondrion transit peptide. The tract at residues 69 to 89 (VRSPQSAKEDGSKQVSVHRSQ) is disordered. Residues 108-128 (FTYLIVVLIGISITGGLFYTI) form a helical membrane-spanning segment.

The protein belongs to the TIM21 family. As to quaternary structure, component of the TIM23 complex. Component of the MITRAC (mitochondrial translation regulation assembly intermediate of cytochrome c oxidase complex) complex, the core components of this complex being COA3/MITRAC12 and COX14. Interacts with COA3 and MT-CO1/COX1.

It localises to the mitochondrion membrane. In terms of biological role, participates in the translocation of transit peptide-containing proteins across the mitochondrial inner membrane. Also required for assembly of mitochondrial respiratory chain complex I and complex IV as component of the MITRAC (mitochondrial translation regulation assembly intermediate of cytochrome c oxidase complex) complex. Probably shuttles between the presequence translocase and respiratory-chain assembly intermediates in a process that promotes incorporation of early nuclear-encoded subunits into these complexes. The chain is Mitochondrial import inner membrane translocase subunit Tim21 (TIMM21) from Bos taurus (Bovine).